The primary structure comprises 321 residues: Cilia- and flagella-associated protein 161 (321 aa).

Residues 275-321 form a disordered region; that stretch reads LSTMLDLPKPPAEDTRALEQEREQVSDPGARSTPDARGCVPQCTLPM. Positions 285 to 299 are enriched in basic and acidic residues; it reads PAEDTRALEQEREQV.

As to quaternary structure, microtubule inner protein component of sperm flagellar doublet microtubules. As to expression, expressed in trachea multiciliated cells.

It localises to the cytoplasm. The protein localises to the cytoskeleton. The protein resides in the cilium axoneme. It is found in the flagellum axoneme. Microtubule inner protein (MIP) part of the dynein-decorated doublet microtubules (DMTs) in cilia axoneme, which is required for motile cilia beating. The sequence is that of Cilia- and flagella-associated protein 161 from Bos taurus (Bovine).